The primary structure comprises 170 residues: Adenine phosphoribosyltransferase (170 aa).

The protein belongs to the purine/pyrimidine phosphoribosyltransferase family. Homodimer.

It is found in the cytoplasm. The enzyme catalyses AMP + diphosphate = 5-phospho-alpha-D-ribose 1-diphosphate + adenine. It participates in purine metabolism; AMP biosynthesis via salvage pathway; AMP from adenine: step 1/1. Functionally, catalyzes a salvage reaction resulting in the formation of AMP, that is energically less costly than de novo synthesis. This Symbiobacterium thermophilum (strain DSM 24528 / JCM 14929 / IAM 14863 / T) protein is Adenine phosphoribosyltransferase.